Here is a 203-residue protein sequence, read N- to C-terminus: MLVAAAADRNKGPILEVLQQYVDPAAPKVRALEVASGTGQHCAHFAQALPNLHLVPSELDPHSRQSISAYISHWSLSNVEQPRTLDSSKSWETWGFSPNSLHLIICINMIHITEPSCTQGLFKGAGHLLMPGGVLFTYGPYSVNGILTPQSNVDFNISLKRRNPAWGIWDTSDLQNLATTCGMSLERMVDMPANNKCLIFRKK.

It belongs to the UPF0585 family.

This is Methyltransferase-like 26 from Xenopus tropicalis (Western clawed frog).